A 416-amino-acid chain; its full sequence is RNA-editing ligase 2, mitochondrial (416 aa).

Residues 1–17 constitute a mitochondrion transit peptide; that stretch reads MLRRLGVRHFRRTPLLF. ATP is bound by residues 29–31, 56–62, Arg-79, Glu-126, Phe-173, and 269–271; these read TEI, EKVHGAN, and KFK. The active-site N6-AMP-lysine intermediate is the Lys-57.

Belongs to the RNA ligase 2 family. Component of the RNA editing complex, a 1600 kDa complex composed of at least 20 proteins.

The protein resides in the mitochondrion. It carries out the reaction ATP + (ribonucleotide)n-3'-hydroxyl + 5'-phospho-(ribonucleotide)m = (ribonucleotide)n+m + AMP + diphosphate.. Functionally, RNA editing in kinetoplastid mitochondria inserts and deletes uridylates at multiple sites in pre-mRNAs as directed by guide RNAs. The polypeptide is RNA-editing ligase 2, mitochondrial (REL2) (Trypanosoma brucei brucei (strain 927/4 GUTat10.1)).